Here is a 77-residue protein sequence, read N- to C-terminus: Large ribosomal subunit protein bL28 (77 aa).

Belongs to the bacterial ribosomal protein bL28 family.

The protein is Large ribosomal subunit protein bL28 of Polynucleobacter asymbioticus (strain DSM 18221 / CIP 109841 / QLW-P1DMWA-1) (Polynucleobacter necessarius subsp. asymbioticus).